A 471-amino-acid chain; its full sequence is O-acetyltransferase astG (471 aa).

It belongs to the fumigaclavine B O-acetyltransferase family. Monomer.

It catalyses the reaction dideacetyl astellolide A + acetyl-CoA = 14-deacetyl astellolide A + CoA. It carries out the reaction dideacetyl astellolide B + acetyl-CoA = 14-deacetyl astellolide B + CoA. The protein operates within secondary metabolite biosynthesis; terpenoid biosynthesis. Its function is as follows. O-acetyltransferase; part of the gene cluster that mediates the biosynthesis of astellolides, drimane-type sesquiterpene esters that show antimicrobial, anti-inflammatory, and anti-tumor activities. The first step in astellolide biosynthesis is performed by the sesquiterpene cyclase astC that catalyzes the formation of drimanyl pyrophosphate from farnesyl pyrophosphate. Drimanyl pyrophosphate is then dephosphorylated by the sesquiterpene phosphatase astI to produce drimanyl monophosphate which is further dephosphorylated to drim-8-ene-11-ol by atsK. Drim-8-ene-11-ol is converted to confertifolin, probably by the cytochrome P450 monooxygenase astD and/or the dehydrogenase astE. The cytochrome P450 monooxygenases astB, astF and astJ then hydroxylate confertifolin at C6, C14, or C15 to form trihydroxy confertifolin. The nonribosomal peptide synthetase astA catalyzes ester bond formation between trihydroxy contifolin and benzoic acid (BA) or 4-hydroxy benzoic acid (4HBA), leading to the formation of dideacetyl astellolides A and B, respectively. Finally, the O-acetyltransferase astG converts dideacetyl astellolides A and B into deacetyl astellolides A and B. The polypeptide is O-acetyltransferase astG (Aspergillus oryzae (strain ATCC 42149 / RIB 40) (Yellow koji mold)).